The sequence spans 117 residues: Ig kappa chain V region 12F2 (117 aa).

The first 6 residues, 1-6, serve as a signal peptide directing secretion; the sequence is LPGARC. A framework-1 region spans residues 7–29; sequence AYDMTQTPASVEVAVGGTVTIKC. The cysteines at positions 29 and 86 are disulfide-linked. Positions 30-40 are complementarity-determining-1; it reads QASQSISTYLS. The segment at 41–55 is framework-2; sequence WYQQKPGQRPKLLIY. The complementarity-determining-2 stretch occupies residues 56–62; sequence RASTLAS. A framework-3 region spans residues 63 to 94; it reads GVSSRFKGSGSGTEFTLTISGVECADAATYYC. The interval 95-106 is complementarity-determining-3; it reads QQGWSSSNVENV. Positions 107 to 116 are framework-4; that stretch reads FGGGTEVVVK.

This Oryctolagus cuniculus (Rabbit) protein is Ig kappa chain V region 12F2.